A 63-amino-acid chain; its full sequence is Conotoxin Cl14.11 (63 aa).

Residues 1-21 (MRFLLLLTVALLLTCIMETDA) form the signal peptide. Residues 22–34 (EAKPEDLAERFRE) constitute a propeptide that is removed on maturation.

In terms of processing, contains 2 disulfide bond. As to expression, expressed by the venom duct.

Its subcellular location is the secreted. The protein is Conotoxin Cl14.11 of Californiconus californicus (California cone).